Reading from the N-terminus, the 433-residue chain is O-methyltransferase VdtC (433 aa).

Asp284 contributes to the S-adenosyl-L-methionine binding site. Catalysis depends on His335, which acts as the Proton acceptor.

This sequence belongs to the class I-like SAM-binding methyltransferase superfamily. Cation-independent O-methyltransferase family. COMT subfamily.

The catalysed reaction is 7,9,10-trihydroxy-3-(2-oxopropyl)-1H-benzo[g]isochromen-1-one + S-adenosyl-L-methionine = 9,10-dihydroxy-7-methoxy-3-(2-oxopropyl)-1H-benzo[g]isochromen-1-one + S-adenosyl-L-homocysteine + H(+). It functions in the pathway secondary metabolite biosynthesis. In terms of biological role, O-methyltransferase; part of the gene cluster that mediates the biosynthesis of viriditoxin, one of the 'classical' secondary metabolites produced by fungi and that has antibacterial activity. The first step is performed by the polyketide synthase VdtA which condenses one acetyl-CoA and 6 malonyl-CoA units to form the heptaketide monomer backbone of viriditoxin. The product of VdtA is then O-methylated on C7 by the O-methyltransferase VdtC. The O-methyl group is important for the stereoselective coupling of the monomers at the final step of viriditoxin biosynthesis. The short-chain dehydrogenase/reductase VdtF then acts as a stereospecific reductase converting the pyrone to dihydropyrone via the reduction of the C3-C4 double bond. The FAD-binding monooxygenase VdtE then converts the ketone group into a methyl-ester group to yield semi-viriditoxin. Finally, the laccase VdtB is involved in dimerization of 2 semi-viriditoxin molecules to yield the final viriditoxin. VdtB is responsible for the regioselective 6,6'-coupling of semi-viriditoxin, which yields (M)-viriditoxin and (P)-viriditoxin at a ratio of 1:2. The non-catalytic carboxylesterase-like protein VdtD affects the stereochemistical outcome of the coupling. The highly reducing polyketide synthase VdtX is not involved in viriditoxin synthesis, but might possibly play a role in the production of additional metabolites not identified yet. This Byssochlamys spectabilis (Paecilomyces variotii) protein is O-methyltransferase VdtC.